The primary structure comprises 318 residues: Pantothenate kinase (318 aa).

96 to 103 (GSVAVGKS) lines the ATP pocket.

It belongs to the prokaryotic pantothenate kinase family.

The protein resides in the cytoplasm. It catalyses the reaction (R)-pantothenate + ATP = (R)-4'-phosphopantothenate + ADP + H(+). It functions in the pathway cofactor biosynthesis; coenzyme A biosynthesis; CoA from (R)-pantothenate: step 1/5. This chain is Pantothenate kinase, found in Rhodopseudomonas palustris (strain ATCC BAA-98 / CGA009).